Consider the following 745-residue polypeptide: Junction plakoglobin (745 aa).

At Met1 the chain carries N-acetylmethionine. Thr14 is a glycosylation site (O-linked (GlcNAc) threonine). Phosphoserine occurs at positions 99 and 125. 12 ARM repeats span residues Asn132 to Lys171, Lys172 to His215, Arg216 to Leu255, Glu258 to Tyr297, Gly298 to Cys341, Pro342 to Asp381, Ala383 to Cys420, Ser423 to Ser464, Glu470 to Leu510, Pro512 to Thr551, Pro574 to Gln613, and Lys615 to Arg661. The segment at Asn132–Tyr297 is interaction with DSC1 and DSG1. Ser182 carries the phosphoserine modification. Positions Pro574–Arg661 are interaction with DSC1. Residues Ser665 and Ser730 each carry the phosphoserine modification.

It belongs to the beta-catenin family. In terms of assembly, homodimer. Component of an E-cadherin/catenin adhesion complex composed of at least E-cadherin/CDH1 and gamma-catenin/JUP, and possibly alpha-catenin/CTNNA1; the complex is located to adherens junctions. The stable association of CTNNA1 is controversial as CTNNA1 was shown not to bind to F-actin when assembled in the complex. Interacts with MUC1. Interacts with CAV1. Interacts with PTPRJ. Interacts with DSG1. Interacts with DSC1 and DSC2. Interacts with PKP2. Interacts with PKP3 (via N-terminus); the interaction is required for PKP3 localization to desmosome cell-cell junctions. Interacts with DSG4. May be phosphorylated by FER.

The protein resides in the cell junction. It is found in the adherens junction. Its subcellular location is the desmosome. The protein localises to the cytoplasm. It localises to the cytoskeleton. The protein resides in the cell membrane. It is found in the nucleus. Its function is as follows. Common junctional plaque protein. The membrane-associated plaques are architectural elements in an important strategic position to influence the arrangement and function of both the cytoskeleton and the cells within the tissue. The presence of plakoglobin in both the desmosomes and in the intermediate junctions suggests that it plays a central role in the structure and function of submembranous plaques. Acts as a substrate for VE-PTP and is required by it to stimulate VE-cadherin function in endothelial cells. Can replace beta-catenin in E-cadherin/catenin adhesion complexes which are proposed to couple cadherins to the actin cytoskeleton. In Bos taurus (Bovine), this protein is Junction plakoglobin.